Consider the following 200-residue polypeptide: NADH-quinone oxidoreductase subunit C (200 aa).

This sequence belongs to the complex I 30 kDa subunit family. As to quaternary structure, NDH-1 is composed of 14 different subunits. Subunits NuoB, C, D, E, F, and G constitute the peripheral sector of the complex.

The protein localises to the cell inner membrane. It catalyses the reaction a quinone + NADH + 5 H(+)(in) = a quinol + NAD(+) + 4 H(+)(out). Functionally, NDH-1 shuttles electrons from NADH, via FMN and iron-sulfur (Fe-S) centers, to quinones in the respiratory chain. The immediate electron acceptor for the enzyme in this species is believed to be ubiquinone. Couples the redox reaction to proton translocation (for every two electrons transferred, four hydrogen ions are translocated across the cytoplasmic membrane), and thus conserves the redox energy in a proton gradient. This chain is NADH-quinone oxidoreductase subunit C, found in Maricaulis maris (strain MCS10) (Caulobacter maris).